An 82-amino-acid chain; its full sequence is Apovitellenin-1 (82 aa).

This sequence belongs to the apovitellenin family. In terms of assembly, monomer. As to expression, found in egg yolk and in plasma.

In terms of biological role, protein component of the very low density lipoprotein (VLDL) of egg-laying females. Potent lipoprotein lipase inhibitor, preventing the loss of triglycerides from VLDL on their way from the liver to the growing oocytes. This is Apovitellenin-1 from Anas platyrhynchos (Mallard).